A 629-amino-acid polypeptide reads, in one-letter code: Protein fem-1 homolog B (629 aa).

6 ANK repeats span residues 47–77, 89–118, 122–151, 155–184, 188–217, and 220–250; these read QRSTPLIIAARNGHSKVVRLLLEHYKVDVQQ, DGATALWCAAGAGHYEVVKLLVSHEANVNH, TNSTPLRAACFDGRLDIVRFLVENNANISI, YDNTCLMIAAYKGHSDVVHYLLRQHADPNA, CGATALHFAAEAGHLDIVRELVKWKAAMVV, and HGMTPLKVAAESCKADVVELLLAHSDCDAKS. A TPR repeat occupies 346–379; that stretch reads SHPIIYRGAVYADNMQFEQCIKLWLHALQLRQKG. ANK repeat units follow at residues 485 to 529 and 533 to 570; these read EGGS…NVNA and MGNSPLHVIVQYNRPISDFLTLHAIIISLVEAGAHTDM.

It belongs to the fem-1 family. In terms of assembly, component of a CRL2 E3 ubiquitin-protein ligase complex, also named ECS (Elongin BC-CUL2/5-SOCS-box protein) complex.

It localises to the cytoplasm. Its subcellular location is the nucleus. It participates in protein modification; protein ubiquitination. In terms of biological role, substrate-recognition component of a Cul2-RING (CRL2) E3 ubiquitin-protein ligase complex of the DesCEND (destruction via C-end degrons) pathway, which recognizes a C-degron located at the extreme C terminus of target proteins, leading to their ubiquitination and degradation. The C-degron recognized by the DesCEND pathway is usually a motif of less than ten residues and can be present in full-length proteins, truncated proteins or proteolytically cleaved forms. The CRL2(FEM1B) complex specifically recognizes proteins ending with -Gly-Leu-Asp-Arg, leading to their ubiquitination and degradation. In Xenopus laevis (African clawed frog), this protein is Protein fem-1 homolog B.